The primary structure comprises 274 residues: Penicillin-insensitive murein endopeptidase (274 aa).

Residues 1–19 (MNKTAIALLALLASSASLA) form the signal peptide. 3 cysteine pairs are disulfide-bonded: C44-C265, C187-C235, and C216-C223. H110, H113, D120, D147, H150, and H211 together coordinate Zn(2+).

It belongs to the peptidase M74 family. In terms of assembly, dimer. It depends on Zn(2+) as a cofactor.

It localises to the periplasm. Functionally, murein endopeptidase that cleaves the D-alanyl-meso-2,6-diamino-pimelyl amide bond that connects peptidoglycan strands. Likely plays a role in the removal of murein from the sacculus. This Shigella sonnei (strain Ss046) protein is Penicillin-insensitive murein endopeptidase.